Here is a 109-residue protein sequence, read N- to C-terminus: Probable WRKY transcription factor 43 (109 aa).

Positions 24–89 (SDADILDDGY…YEGIHNHPCE (66 aa)) form a DNA-binding region, WRKY.

Belongs to the WRKY group II-c family.

The protein localises to the nucleus. Functionally, transcription factor. Interacts specifically with the W box (5'-(T)TGAC[CT]-3'), a frequently occurring elicitor-responsive cis-acting element. This is Probable WRKY transcription factor 43 (WRKY43) from Arabidopsis thaliana (Mouse-ear cress).